Consider the following 1036-residue polypeptide: Integrin alpha-9 (1036 aa).

A signal peptide spans 1 to 28 (MGGPAAARTGAGGLRALLLALVAAGVPA). Over 29 to 981 (GAYNLDAQRP…NLEPRGYVVG (953 aa)) the chain is Extracellular. 7 FG-GAP repeats span residues 36–97 (QRPV…PDRR), 109–175 (RGAP…AKGK), 183–233 (EYKK…NTYF), 234–290 (KLND…SGTL), 291–350 (IKIF…GALE), 352–409 (QLTL…GIVP), and 412–475 (SMKL…LPGS). Intrachain disulfides connect Cys-88–Cys-98, Cys-143–Cys-163, and Cys-180–Cys-195. Asn-226 carries an N-linked (GlcNAc...) asparagine glycan. Ca(2+) contacts are provided by Asp-313, Asn-315, Asp-317, Asp-321, Asp-374, Asp-376, Asp-378, Asp-382, Asp-436, Asp-438, Asn-440, and Asp-444. Cys-483 and Cys-492 form a disulfide bridge. N-linked (GlcNAc...) asparagine glycans are attached at residues Asn-494 and Asn-515. Cystine bridges form between Cys-498/Cys-556, Cys-621/Cys-626, and Cys-697/Cys-707. The N-linked (GlcNAc...) asparagine glycan is linked to Asn-808. Cystine bridges form between Cys-856–Cys-892 and Cys-899–Cys-904. The helical transmembrane segment at 982–1002 (WIIAISLLVGILIFLLLAVLL) threads the bilayer. Topologically, residues 1003–1036 (WKMGFFRRRYKEIIEAEKNRKENEDGWDWVQKNQ) are cytoplasmic. Residues 1006 to 1010 (GFFRR) carry the GFFKR motif motif.

The protein belongs to the integrin alpha chain family. Heterodimer of an alpha and a beta subunit. Alpha-9 (ITGA9) associates with beta-1 (ITGB1). Integrin ITGA9:ITGB1 interacts with FBLN5 (via N-terminus). Integrin ITGA9:ITGB1 interacts with SPP1/OPN (via N-terminus). Integrin ITGA9:ITGB1 interacts with TNC/TNFN3 (via the 3rd Fibronectin type-III domain). Integrin ITGA9:ITGB1 interacts with SVEP1/polydom (via Sushi domain 21); thereby inhibits Ca(2+) intracellular signaling and as a result represses vasocontraction. Expressed in the media layer of the arterial wall (at protein level). Expressed in the airway epithelium, skeletal muscle, basal keratincytes, the basal epithelium of the cornea, hepatocytes, giant cells in the spleen and smooth muscle of the stomach, duodenum and veins (at protein level).

Its subcellular location is the membrane. Integrin alpha-9/beta-1 (ITGA9:ITGB1) is a receptor for VCAM1, cytotactin and osteopontin. It recognizes the sequence A-E-I-D-G-I-E-L in cytotactin. ITGA9:ITGB1 may play a crucial role in SVEP1/polydom-mediated myoblast cell adhesion. Integrin ITGA9:ITGB1 represses PRKCA-mediated L-type voltage-gated channel Ca(2+) influx and ROCK-mediated calcium sensitivity in vascular smooth muscle cells via its interaction with SVEP1, thereby inhibiting vasocontraction. In Mus musculus (Mouse), this protein is Integrin alpha-9.